The sequence spans 410 residues: MAEDAAEDAAAAAVEPATRPAAGPALWRLPEELLLLICSYLDTRALGRLAQVCRWLRRFTSCDLLWRPIARASLNTGFTRLGTDLMAGIPVKERVKLSQNWRLGRCRDRILLKWRYSQMPWMQLQDASLYLSQANFILAYQFRPDGASLNRRPFRVFSGHDEDVCHFVLANSHIVSAGGDGKIGVHKIHSTFTVKYSAHEQEVNCVDCKGGIIVSGSRDRTAKVWPLASGRLGQCLHTIQTEDRVWSIAISPLLSSFVTGTACCGHFSPLRIWDLNSGQLITHLGSDFPPGAGVLDVMYESPSTLLSCGYDTYVRYWDLRTSTRKCVMEWEEPHDSTFYCLQTDGNHLLATGSSYYGLVRLWDRRQRACLHAFSLTSTPLSSPVYCLRFTTRHLYAALSYNLHVLDFQNP.

The F-box domain maps to 23 to 69; it reads GPALWRLPEELLLLICSYLDTRALGRLAQVCRWLRRFTSCDLLWRPI. 4 WD repeats span residues 159-196, 198-235, 289-327, and 333-372; these read GHDE…TVKY, AHEQ…LGQC, PPGA…RKCV, and PHDS…CLHA.

In terms of assembly, part of a SCF (SKP1-cullin-F-box) protein ligase complex. Interacts with POUF51.

Probably recognizes and binds to some phosphorylated proteins and promotes their ubiquitination and degradation. Likely to be involved in key signaling pathways crucial for normal limb development. May participate in Wnt signaling. In Mus musculus (Mouse), this protein is F-box/WD repeat-containing protein 4 (Fbxw4).